The following is a 98-amino-acid chain: Protein S100-A11 (98 aa).

Position 5 is a phosphothreonine (Thr5). EF-hand domains are found at residues 8-44 (CIES…ELAA) and 50-85 (KDPG…LAIA). The residue at position 22 (Lys22) is an N6-acetyllysine. Residues Asn26, Gln28, Glu33, Asp63, Asn65, Asp67, Gln69, and Glu74 each contribute to the Ca(2+) site.

This sequence belongs to the S-100 family. Homodimer; disulfide-linked. Phosphorylation at Thr-5 significantly suppresses homodimerization and promotes association with NCL/nucleolin which induces nuclear translocation.

Its subcellular location is the cytoplasm. The protein localises to the nucleus. Functionally, facilitates the differentiation and the cornification of keratinocytes. This chain is Protein S100-A11 (S100a11), found in Mus musculus (Mouse).